Reading from the N-terminus, the 117-residue chain is Cuticle protein CP1246 (117 aa).

Repeat copies occupy residues 1-17, 26-43, 67-84, and 93-110.

Calcified shell.

In Cancer pagurus (Rock crab), this protein is Cuticle protein CP1246.